A 281-amino-acid polypeptide reads, in one-letter code: Large ribosomal subunit protein uL22 (281 aa).

Residues 1–225 (MASPMGSTAS…KAGGAAEAEV (225 aa)) form a large ribosomal subunit protein uL22 region. Disordered regions lie at residues 137-175 (RATK…PVAA) and 199-281 (AVAS…GGTR). A compositionally biased stretch (basic residues) spans 139–153 (TKKAVPKGARHRRRL). Composition is skewed to low complexity over residues 159–175 (PAAS…PVAA) and 199–239 (AVAS…APAA). Residues 226–281 (ATTDEQTTETAPAAEAEKPAVRRPAARKSTTSARRRAAETEGHDSDAESTDEGGTR) are unknown. Positions 261-271 (RAAETEGHDSD) are enriched in basic and acidic residues. Over residues 272–281 (AESTDEGGTR) the composition is skewed to acidic residues.

It belongs to the universal ribosomal protein uL22 family. In terms of assembly, part of the 50S ribosomal subunit.

In terms of biological role, the globular domain of the protein is located near the polypeptide exit tunnel on the outside of the subunit, while an extended beta-hairpin is found that lines the wall of the exit tunnel in the center of the 70S ribosome. This protein binds specifically to 23S rRNA; its binding is stimulated by other ribosomal proteins, e.g. L4, L17, and L20. It is important during the early stages of 50S assembly. It makes multiple contacts with different domains of the 23S rRNA in the assembled 50S subunit and ribosome. In Acidothermus cellulolyticus (strain ATCC 43068 / DSM 8971 / 11B), this protein is Large ribosomal subunit protein uL22.